The primary structure comprises 329 residues: Flotillin-like protein FloA (329 aa).

The next 2 helical transmembrane spans lie at 4-24 (FIPF…ILSF) and 27-47 (VGLW…TLVG).

This sequence belongs to the flotillin-like FloA family. Homooligomerizes.

The protein resides in the cell membrane. The protein localises to the membrane raft. Found in functional membrane microdomains (FMM) that may be equivalent to eukaryotic membrane rafts. FMMs are highly dynamic and increase in number as cells age. Flotillins are thought to be important factors in membrane fluidity. This chain is Flotillin-like protein FloA, found in Alkaliphilus metalliredigens (strain QYMF).